We begin with the raw amino-acid sequence, 123 residues long: Histone H1-like protein HC1 (123 aa).

Residues 54-123 (IKAEKSGLLK…KPSKARGFRK (70 aa)) are disordered. Positions 61–75 (LLKRKPSTKAPAKVK) are enriched in basic residues. Residues 85 to 102 (KSSAAAAKTSKAVKASKP) show a composition bias toward low complexity. Over residues 103–123 (ASKKTAAKKVKKPSKARGFRK) the composition is skewed to basic residues.

Belongs to the histone H1/H5 family. HCT subfamily.

In terms of biological role, might have a role analogous to that of eukaryotic histone proteins. In Chlamydia pneumoniae (Chlamydophila pneumoniae), this protein is Histone H1-like protein HC1 (hctA).